A 316-amino-acid polypeptide reads, in one-letter code: Beta-lactamase 3 (316 aa).

The N-terminal stretch at 1-29 (MFVLNKFFTNSHYKKIVPVVLLSCATLIG) is a signal peptide. C30 carries N-palmitoyl cysteine lipidation. C30 carries S-diacylglycerol cysteine lipidation. A disordered region spans residues 34-53 (NTQSESNKQTNQTNQVKQEN). A compositionally biased stretch (low complexity) spans 40–50 (NKQTNQTNQVK). S95 serves as the catalytic Acyl-ester intermediate. The active-site Proton acceptor is E191. 257 to 259 (KTG) lines the substrate pocket.

The protein belongs to the class-A beta-lactamase family.

It localises to the cell membrane. It carries out the reaction a beta-lactam + H2O = a substituted beta-amino acid. The protein is Beta-lactamase 3 (blaZ) of Bacillus cereus.